The sequence spans 359 residues: Nicotinate-nucleotide--dimethylbenzimidazole phosphoribosyltransferase (359 aa).

The active-site Proton acceptor is the glutamate 318.

It belongs to the CobT family. As to quaternary structure, homodimer.

It catalyses the reaction 5,6-dimethylbenzimidazole + nicotinate beta-D-ribonucleotide = alpha-ribazole 5'-phosphate + nicotinate + H(+). Its pathway is nucleoside biosynthesis; alpha-ribazole biosynthesis; alpha-ribazole from 5,6-dimethylbenzimidazole: step 1/2. Its function is as follows. Catalyzes the synthesis of alpha-ribazole-5'-phosphate from nicotinate mononucleotide (NAMN) and 5,6-dimethylbenzimidazole (DMB). This chain is Nicotinate-nucleotide--dimethylbenzimidazole phosphoribosyltransferase, found in Shigella sonnei (strain Ss046).